The primary structure comprises 79 residues: Small ribosomal subunit protein bS16c (79 aa).

The protein belongs to the bacterial ribosomal protein bS16 family.

The protein localises to the plastid. The protein resides in the chloroplast. The protein is Small ribosomal subunit protein bS16c of Staurastrum punctulatum (Green alga).